A 786-amino-acid chain; its full sequence is Protein translocase subunit SecA 1 (786 aa).

ATP contacts are provided by residues Gln85, 103–107 (GEGKT), and Asp491.

It belongs to the SecA family. Monomer and homodimer. Part of the essential Sec protein translocation apparatus which comprises SecA, SecYEG and auxiliary proteins SecDF. Other proteins may also be involved.

The protein localises to the cell membrane. It localises to the cytoplasm. The catalysed reaction is ATP + H2O + cellular proteinSide 1 = ADP + phosphate + cellular proteinSide 2.. Its function is as follows. Part of the Sec protein translocase complex. Interacts with the SecYEG preprotein conducting channel. Has a central role in coupling the hydrolysis of ATP to the transfer of proteins into and across the cell membrane, serving as an ATP-driven molecular motor driving the stepwise translocation of polypeptide chains across the membrane. The protein is Protein translocase subunit SecA 1 of Pediococcus pentosaceus (strain ATCC 25745 / CCUG 21536 / LMG 10740 / 183-1w).